A 186-amino-acid polypeptide reads, in one-letter code: MGGSVSPPGTGEGTLQYSLIMEHLVGDKRRPKEVIPGGLGGIPTPIKSEEQKMMERVMESCGFKAALACVGGFVLGGAFGVFTAGIDTNVGFDPKDPYRTPTAKEVLKDMGQRGMSYAKNFAIVGAMFSCTECLVESYRGKSDWKNSVISGCITGGAIGFRAGLKAGALGCGGFAAFSAVIDYYLR.

2 disulfides stabilise this stretch: Cys61/Cys133 and Cys152/Cys171. The next 3 helical transmembrane spans lie at 66–86 (ALACVGGFVLGGAFGVFTAGI), 117–135 (YAKNFAIVGAMFSCTECLV), and 162–182 (AGLKAGALGCGGFAAFSAVID).

This sequence belongs to the Tim17/Tim22/Tim23 family. Core component of the TIM22 complex.

It is found in the mitochondrion inner membrane. Its function is as follows. Essential core component of the TIM22 complex, a complex that mediates the import and insertion of multi-pass transmembrane proteins into the mitochondrial inner membrane. In the TIM22 complex, it constitutes the voltage-activated and signal-gated channel. Forms a twin-pore translocase that uses the membrane potential as external driving force in 2 voltage-dependent steps. The sequence is that of Mitochondrial import inner membrane translocase subunit Tim22 (timm22) from Xenopus tropicalis (Western clawed frog).